A 797-amino-acid polypeptide reads, in one-letter code: Discoidin domain-containing receptor tyrosine kinase B (797 aa).

The first 19 residues, 1 to 19, serve as a signal peptide directing secretion; the sequence is MKLLLYLFGVTFHSNTVVA. At 20–384 the chain is on the extracellular side; that stretch reads LELRECSHQL…VTEHDDGTSM (365 aa). One can recognise an F5/8 type C domain in the interval 25–181; it reads CSHQLGMSNR…VCMRVEVFGC (157 aa). Cysteine 25 and cysteine 181 are oxidised to a cystine. A disordered region spans residues 46 to 66; that stretch reads SFDLQSTGPQHARAHQESGSG. Asparagine 141, asparagine 167, asparagine 264, and asparagine 353 each carry an N-linked (GlcNAc...) asparagine glycan. A helical transmembrane segment spans residues 385 to 405; the sequence is FAFIIFFFMFLIVAVIILTVL. Over 406 to 797 the chain is Cytoplasmic; it reads YRKREYRVKA…LVHTSPHIHF (392 aa). Positions 527–785 constitute a Protein kinase domain; it reads LICVSRIGQG…PSFENVHLHL (259 aa). ATP-binding positions include 533-541 and lysine 554; that span reads IGQGEFGEV. Aspartate 645 (proton acceptor) is an active-site residue.

Belongs to the protein kinase superfamily. Tyr protein kinase family. Insulin receptor subfamily. As to quaternary structure, interacts with shc-1. In terms of processing, autophosphorylated on tyrosine residues. N-glycosylation at Asn-141 is required for axon regeneration after injury but is dispensable for kinase activity and axon localization. In terms of tissue distribution, expressed in some neurons in head and tail, some motoneurons in ventral nerve cord, in PVP interneurons, seam cells, rectal gland cells, vulva cells and some non-neuronal cells in the tail. Expressed in D-type motor neurons.

The protein localises to the cell membrane. The protein resides in the cell projection. It is found in the axon. Its subcellular location is the perikaryon. The enzyme catalyses L-tyrosyl-[protein] + ATP = O-phospho-L-tyrosyl-[protein] + ADP + H(+). Functionally, tyrosine-protein kinase receptor which, together with ddr-1, is involved in axon guidance to establish the tracts for the ventral and dorsal nerve cords during nervous system development. Acts upstream of the adapter shc-1, and the tyrosine kinase receptors svh-1 and svh-2 to regulate axon regeneration following injury in D-type motor neurons. May mediate axon regeneration in association with the collagen emb-9. This is Discoidin domain-containing receptor tyrosine kinase B from Caenorhabditis elegans.